Here is a 307-residue protein sequence, read N- to C-terminus: Transcription initiation factor IIF subunit beta (307 aa).

Basic and acidic residues predominate over residues 1–12 (MSEEKPTVRTEE). 2 disordered regions span residues 1–22 (MSEE…DAGD) and 261–307 (VELR…IDVV). Positions 13–22 (DDRYEDDAGD) are enriched in acidic residues. Polar residues predominate over residues 263–290 (LRNQQASQSESSSIDHTGKNTSPDNPGT). Acidic residues predominate over residues 292–307 (AEEDEDDDGVEMIDVV).

It belongs to the TFIIF beta subunit family. As to quaternary structure, component of the fcp1/TFIIF/polII complex via interaction of tfg3 with both tfg1/TFIIF-alpha and tfg2/TFIIF-beta subunits.

It is found in the nucleus. Functionally, TFIIF is a general transcription initiation factor that binds to RNA polymerase II and helps to recruit it to the initiation complex in collaboration with TFIIB. It promotes transcription elongation. In Schizosaccharomyces pombe (strain 972 / ATCC 24843) (Fission yeast), this protein is Transcription initiation factor IIF subunit beta (tfg2).